We begin with the raw amino-acid sequence, 357 residues long: Tetraacyldisaccharide 4'-kinase (357 aa).

49-56 (TIGGTGKT) is an ATP binding site.

It belongs to the LpxK family.

The enzyme catalyses a lipid A disaccharide + ATP = a lipid IVA + ADP + H(+). It functions in the pathway glycolipid biosynthesis; lipid IV(A) biosynthesis; lipid IV(A) from (3R)-3-hydroxytetradecanoyl-[acyl-carrier-protein] and UDP-N-acetyl-alpha-D-glucosamine: step 6/6. Its function is as follows. Transfers the gamma-phosphate of ATP to the 4'-position of a tetraacyldisaccharide 1-phosphate intermediate (termed DS-1-P) to form tetraacyldisaccharide 1,4'-bis-phosphate (lipid IVA). The chain is Tetraacyldisaccharide 4'-kinase from Porphyromonas gingivalis (strain ATCC BAA-308 / W83).